We begin with the raw amino-acid sequence, 510 residues long: Aspartate kinase FUB3 (510 aa).

ACT domains follow at residues 372 to 440 and 446 to 510; these read ILSN…VLPD and LVGA…KNAI.

It belongs to the aspartokinase family.

It catalyses the reaction L-aspartate + ATP = 4-phospho-L-aspartate + ADP. It participates in mycotoxin biosynthesis. Its function is as follows. Aspartate kinase; part of the gene cluster that mediates the biosynthesis of fusaric acid, a mycotoxin with low to moderate toxicity to animals and humans, but with high phytotoxic properties. L-aspartate is suggested as fusaric acid amino acid precursor that is activated and further processed to O-acetyl-L-homoserine by cluster enzymes aspartate kinase FUB3 and homoserine O-acetyltransferase FUB5, as well as enzymes of the primary metabolism. The polyketide synthase (PKS) FUB1 generates the triketide trans-2-hexenal which is presumptively released by the hydrolase FUB4 and linked to the NRPS-bound amino acid precursor by NAD(P)-dependent dehydrogenase FUB6. FUB1, FUB4, and the non-canonical NRPS Fub8 may form an enzyme complex. Further processing of the NRPS-bound intermediate might be carried out by FUB6 and the sulfhydrylase FUB7, enabling a spontaneous electrocyclization to close the carbon backbone of fusaric acid. Dihydrofusaric acid is likely to be released via reduction by the thioester reductase (TR) domain of FUB8 whereupon the final oxidation to fusaric acid may (also) be performed by the FMN-dependent dehydrogenase FUB9. This Gibberella fujikuroi (strain CBS 195.34 / IMI 58289 / NRRL A-6831) (Bakanae and foot rot disease fungus) protein is Aspartate kinase FUB3.